The chain runs to 324 residues: Olfactory receptor 2T2 (324 aa).

Residues M1–G26 lie on the Extracellular side of the membrane. N9 carries N-linked (GlcNAc...) asparagine glycosylation. Residues L27 to I50 traverse the membrane as a helical segment. At H51–T58 the chain is on the cytoplasmic side. Residues P59–P80 form a helical membrane-spanning segment. At K81 to Q101 the chain is on the extracellular side. A disulfide bond links C98 and C190. A helical membrane pass occupies residues I102 to Y121. Over D122–R140 the chain is Cytoplasmic. Residues V141–M159 form a helical membrane-spanning segment. The Extracellular portion of the chain corresponds to L160–Y196. The helical transmembrane segment at E197–T220 threads the bilayer. Over H221 to K237 the chain is Cytoplasmic. The helical transmembrane segment at A238–N260 threads the bilayer. At V261–K273 the chain is on the extracellular side. The chain crosses the membrane as a helical span at residues V274–L293. The Cytoplasmic segment spans residues R294 to G324.

This sequence belongs to the G-protein coupled receptor 1 family.

The protein resides in the cell membrane. In terms of biological role, odorant receptor. This Homo sapiens (Human) protein is Olfactory receptor 2T2 (OR2T2).